Consider the following 515-residue polypeptide: Zinc metalloproteinase-disintegrin BA-5A (515 aa).

A signal peptide spans 1 to 20; it reads MMQVLLVTICLAVFPYQGSS. The propeptide occupies 21 to 193; it reads IILESGNVND…KEASQLVATS (173 aa). In terms of domain architecture, Peptidase M12B spans 203–399; sequence RYIKYFIVVD…YKPDCTLIRP (197 aa). N-linked (GlcNAc...) asparagine glycosylation is present at Asn263. 11 disulfide bridges follow: Cys314/Cys394, Cys354/Cys378, Cys356/Cys361, Cys410/Cys429, Cys421/Cys439, Cys423/Cys434, Cys433/Cys456, Cys447/Cys453, Cys452/Cys478, Cys465/Cys485, and Cys472/Cys497. His339 lines the Zn(2+) pocket. Glu340 is an active-site residue. The Zn(2+) site is built by His343 and His349. N-linked (GlcNAc...) asparagine glycosylation is present at Asn377. Positions 407-493 constitute a Disintegrin domain; it reads PPVCGNDILE…DCPIDHFHRN (87 aa). The D/ECD-tripeptide motif lies at 471–473; sequence ECD.

The protein belongs to the venom metalloproteinase (M12B) family. P-II subfamily. In terms of assembly, monomer. The cofactor is Zn(2+). Expressed by the venom gland.

It localises to the secreted. Snake venom zinc metalloprotease that possesses hemorrhagic activity and degrades alpha chain of fibrinogen (FGA). May inhibit alpha-2/beta-1 integrin (ITGA2/ITGB1). The protein is Zinc metalloproteinase-disintegrin BA-5A of Bitis arietans (African puff adder).